The following is a 1414-amino-acid chain: DNA-directed RNA polymerase subunit beta' (1414 aa).

Cys70, Cys72, Cys85, and Cys88 together coordinate Zn(2+). The Mg(2+) site is built by Asp460, Asp462, and Asp464. Residues Cys814, Cys888, Cys895, and Cys898 each coordinate Zn(2+). The interval 1378-1414 is disordered; the sequence is EREAARQLANPFEDAPVTVGGEPEAPAADTPSDDSAE.

This sequence belongs to the RNA polymerase beta' chain family. The RNAP catalytic core consists of 2 alpha, 1 beta, 1 beta' and 1 omega subunit. When a sigma factor is associated with the core the holoenzyme is formed, which can initiate transcription. It depends on Mg(2+) as a cofactor. Zn(2+) serves as cofactor.

The enzyme catalyses RNA(n) + a ribonucleoside 5'-triphosphate = RNA(n+1) + diphosphate. DNA-dependent RNA polymerase catalyzes the transcription of DNA into RNA using the four ribonucleoside triphosphates as substrates. This Bordetella bronchiseptica (strain ATCC BAA-588 / NCTC 13252 / RB50) (Alcaligenes bronchisepticus) protein is DNA-directed RNA polymerase subunit beta'.